We begin with the raw amino-acid sequence, 581 residues long: Caprolactamase subunit beta (581 aa).

Zn(2+) is bound by residues D41, H99, D102, and H124.

The protein belongs to the HyuB family. As to quaternary structure, the caprolactamase is a heterotetramer composed of two alpha subunits (CapA) and two beta subunits (CapB). Requires Zn(2+) as cofactor.

Its activity is regulated as follows. Activity is dependent on the presence of ATP and bicarbonate. The requirement for bicarbonate may be related to allosteric activation through conformational effects, but it is also conceivable that carboxyphosphate is formed and acts as a mediator in caprolactam activation, forming carboxy- or phospholactim. Its function is as follows. Component of a caprolactamase involved in the degradation of caprolactam, an industrial compound mainly used in the production of Nylon 6. Catalyzes the ATP-dependent hydrolysis of the caprolactam ring to form 6-aminocaproic acid (6-ACA). The beta subunit is responsible for hydrolytic lactam ring opening. The enzyme cannot use 5-oxoproline. The chain is Caprolactamase subunit beta from Pseudomonas jessenii.